Here is a 132-residue protein sequence, read N- to C-terminus: Putative apolipoprotein(a)-like protein 2 (132 aa).

An N-terminal signal peptide occupies residues 1-21 (MEHKEVVLLLLLFLKSAPTET). One can recognise a Kringle domain in the interval 27–105 (ECYHSNGQSY…RWEYCNLTRC (79 aa)). 3 disulfides stabilise this stretch: cysteine 28-cysteine 105, cysteine 49-cysteine 88, and cysteine 77-cysteine 100. N-linked (GlcNAc...) asparagine glycosylation is present at asparagine 101.

Expressed in liver but not in other tissues tested.

The protein localises to the secreted. This chain is Putative apolipoprotein(a)-like protein 2 (LPAL2), found in Homo sapiens (Human).